Consider the following 146-residue polypeptide: Hemoglobin subunit beta (146 aa).

In terms of domain architecture, Globin spans 2-146 (HWTAEEKQLI…VAHALARKYH (145 aa)). Residues histidine 63 and histidine 92 each coordinate heme b.

Belongs to the globin family. Heterotetramer of two alpha chains and two beta chains. As to expression, red blood cells.

Functionally, involved in oxygen transport from the lung to the various peripheral tissues. This Aquila chrysaetos (Golden eagle) protein is Hemoglobin subunit beta (HBB).